The primary structure comprises 222 residues: MGQQLSGQAVTRLPEKLIKHVGLVRDSGYLTYDEFLGRVAELNDVTAKLASGQKKHLLFEVQPGSDSSALWKVAVRIVCTKINKEDGMVEASRIMNLYQFIQLYKDITSQAAEVFSSNVAAEGSSEDTCQASMWMGRVKQLTDEEECCICMDGKADLILPCAHSFCQKCIDKWSGQSRNCPVCRIQVTAANESWVMSDAPTGEDVAGYILNLADEAGHPHRP.

The segment at 147–184 adopts an RING-type zinc-finger fold; it reads CCICMDGKADLILPCAHSFCQKCIDKWSGQSRNCPVCR.

The protein is RING finger protein 141 (rnf141) of Danio rerio (Zebrafish).